Consider the following 802-residue polypeptide: Outer membrane usher protein PefC (802 aa).

The N-terminal stretch at 1 to 24 (MSFHHRVFKLSALSLALFSHLSFA) is a signal peptide. Cys-782 and Cys-801 form a disulfide bridge.

The protein belongs to the fimbrial export usher family.

The protein localises to the cell outer membrane. Involved in the export and assembly of FimA fimbrial subunits across the outer membrane. The polypeptide is Outer membrane usher protein PefC (pefC) (Salmonella typhimurium (strain LT2 / SGSC1412 / ATCC 700720)).